Reading from the N-terminus, the 292-residue chain is Cytidine deaminase (292 aa).

2 CMP/dCMP-type deaminase domains span residues 47-167 (TPLK…FGPK) and 186-292 (DHQD…YYSL). 88–90 (NQE) is a substrate binding site. Position 101 (H101) interacts with Zn(2+). Residue E103 is the Proton donor of the active site. 2 residues coordinate Zn(2+): C128 and C131.

The protein belongs to the cytidine and deoxycytidylate deaminase family. In terms of assembly, homodimer. Requires Zn(2+) as cofactor.

It catalyses the reaction cytidine + H2O + H(+) = uridine + NH4(+). The catalysed reaction is 2'-deoxycytidine + H2O + H(+) = 2'-deoxyuridine + NH4(+). This enzyme scavenges exogenous and endogenous cytidine and 2'-deoxycytidine for UMP synthesis. The polypeptide is Cytidine deaminase (Haemophilus influenzae (strain PittEE)).